The following is a 180-amino-acid chain: Sec-independent protein translocase protein TatB (180 aa).

Residues 1–21 (MFDIGWSELLVIGVVALIAIG) traverse the membrane as a helical segment. Residues 95–180 (IEGVDKPVES…AERLKDAKAS (86 aa)) are disordered. The span at 103-123 (ESQPAASAAPETSATVEAPAT) shows a compositional bias: low complexity. The segment covering 170-180 (EAERLKDAKAS) has biased composition (basic and acidic residues).

This sequence belongs to the TatB family. In terms of assembly, the Tat system comprises two distinct complexes: a TatABC complex, containing multiple copies of TatA, TatB and TatC subunits, and a separate TatA complex, containing only TatA subunits. Substrates initially bind to the TatABC complex, which probably triggers association of the separate TatA complex to form the active translocon.

The protein localises to the cell inner membrane. In terms of biological role, part of the twin-arginine translocation (Tat) system that transports large folded proteins containing a characteristic twin-arginine motif in their signal peptide across membranes. Together with TatC, TatB is part of a receptor directly interacting with Tat signal peptides. TatB may form an oligomeric binding site that transiently accommodates folded Tat precursor proteins before their translocation. The protein is Sec-independent protein translocase protein TatB of Bradyrhizobium sp. (strain BTAi1 / ATCC BAA-1182).